We begin with the raw amino-acid sequence, 327 residues long: GMP reductase (327 aa).

Catalysis depends on C176, which acts as the Thioimidate intermediate. 205–228 contacts NADP(+); the sequence is IIADGGIRTHGDIAKSIRFGASMV.

Belongs to the IMPDH/GMPR family. GuaC type 2 subfamily.

The enzyme catalyses IMP + NH4(+) + NADP(+) = GMP + NADPH + 2 H(+). Catalyzes the irreversible NADPH-dependent deamination of GMP to IMP. It functions in the conversion of nucleobase, nucleoside and nucleotide derivatives of G to A nucleotides, and in maintaining the intracellular balance of A and G nucleotides. This is GMP reductase from Streptococcus agalactiae serotype III (strain NEM316).